The following is a 29-amino-acid chain: L-serine dehydratase, beta chain (29 aa).

This sequence belongs to the iron-sulfur dependent L-serine dehydratase family. In terms of assembly, heterodimer of an alpha chain and a beta chain. Requires [4Fe-4S] cluster as cofactor.

The catalysed reaction is L-serine = pyruvate + NH4(+). Its pathway is carbohydrate biosynthesis; gluconeogenesis. The chain is L-serine dehydratase, beta chain from Anaerotignum propionicum (Clostridium propionicum).